A 226-amino-acid polypeptide reads, in one-letter code: Triosephosphate isomerase (226 aa).

10–12 serves as a coordination point for substrate; it reads NFK. The active-site Electrophile is histidine 96. Residue glutamate 144 is the Proton acceptor of the active site. Residues isoleucine 149, glycine 184, and 205-206 contribute to the substrate site; that span reads AS.

Belongs to the triosephosphate isomerase family. Homotetramer; dimer of dimers.

It is found in the cytoplasm. It catalyses the reaction D-glyceraldehyde 3-phosphate = dihydroxyacetone phosphate. It functions in the pathway carbohydrate biosynthesis; gluconeogenesis. It participates in carbohydrate degradation; glycolysis; D-glyceraldehyde 3-phosphate from glycerone phosphate: step 1/1. Its function is as follows. Involved in the gluconeogenesis. Catalyzes stereospecifically the conversion of dihydroxyacetone phosphate (DHAP) to D-glyceraldehyde-3-phosphate (G3P). The chain is Triosephosphate isomerase from Methanopyrus kandleri (strain AV19 / DSM 6324 / JCM 9639 / NBRC 100938).